A 156-amino-acid chain; its full sequence is Translation initiation factor IF-1, chloroplastic (156 aa).

A disordered region spans residues 1-35 (MAASLTLMTSPPCSRSSKSPSPSPSPSLSCNQQQQ). Residues 1-49 (MAASLTLMTSPPCSRSSKSPSPSPSPSLSCNQQQQYKPLLHHQWPPQIS) constitute a chloroplast transit peptide. A compositionally biased stretch (low complexity) spans 10–20 (SPPCSRSSKSP). In terms of domain architecture, S1-like spans 72–148 (GGSPSVQEQK…TRGRITYRLR (77 aa)).

The protein belongs to the IF-1 family. Component of the 30S ribosomal translation pre-initiation complex which assembles on the 30S ribosome in the order IF-2 and IF-3, IF-1 and N-formylmethionyl-tRNA(fMet); mRNA recruitment can occur at any time during PIC assembly.

The protein resides in the plastid. Its subcellular location is the chloroplast. Its function is as follows. One of the essential components for the initiation of protein synthesis. Stabilizes the binding of IF-2 and IF-3 on the 30S subunit to which N-formylmethionyl-tRNA(fMet) subsequently binds. Helps modulate mRNA selection, yielding the 30S pre-initiation complex (PIC). Upon addition of the 50S ribosomal subunit IF-1, IF-2 and IF-3 are released leaving the mature 70S translation initiation complex. This chain is Translation initiation factor IF-1, chloroplastic (infA), found in Mesembryanthemum crystallinum (Common ice plant).